A 404-amino-acid chain; its full sequence is Odorant receptor 74a (404 aa).

Residues 1–38 (MSFHRYRPRLPGGELAPMPWPVSLYRVLNHVAWPLEAE) lie on the Cytoplasmic side of the membrane. Residues 39 to 59 (SGRWTVFLDRLMIFLGFLVFC) traverse the membrane as a helical segment. Over 60 to 67 (EHNEVDFH) the chain is Extracellular. A helical membrane pass occupies residues 68–88 (YLIANRQDMDNMLTGLPTYLI). The Cytoplasmic segment spans residues 89 to 141 (LVEMQIRCFQLAWHKDRFRALLQRFYAEIYVSEEMEPHLFASIQRQMLATRVN). The helical transmembrane segment at 142–162 (STVYLLALLNFFLVPVTNVIY) threads the bilayer. Over 163-181 (HRREMLYKQVYPFDNTQLH) the chain is Extracellular. Residues 182 to 202 (FFIPLLVLNFWVGFIITSMLF) traverse the membrane as a helical segment. The Cytoplasmic portion of the chain corresponds to 203-274 (GELNVMGELM…QRVEKEFTLR (72 aa)). The chain crosses the membrane as a helical span at residues 275-295 (IFVMFAFSAGLLCALFFKAFT). Residues 296–303 (NPWGNVAY) lie on the Extracellular side of the membrane. Residues 304-324 (IVWFLAKFMELLALGMLGSIL) form a helical membrane-spanning segment. The Cytoplasmic segment spans residues 325-380 (LKTTDELGMMYYTADWEQVIHQSDNVGENVKLMKLVTLAIQLNSRPFFITGLNYFR). A helical membrane pass occupies residues 381 to 401 (VSLTAVLKIIQGAFSYFTFLN). Residues 402–404 (SMR) are Extracellular-facing.

It belongs to the insect chemoreceptor superfamily. Heteromeric odorant receptor channel (TC 1.A.69) family. Or1a subfamily. In terms of assembly, interacts with Orco. Complexes exist early in the endomembrane system in olfactory sensory neurons (OSNs), coupling these complexes to the conserved ciliary trafficking pathway.

It is found in the cell membrane. Odorant receptor which mediates acceptance or avoidance behavior, depending on its substrates. The odorant receptor repertoire encodes a large collection of odor stimuli that vary widely in identity, intensity, and duration. May form a complex with Orco to form odorant-sensing units, providing sensitive and prolonged odorant signaling and calcium permeability. Involved in the behavioral responses to octanol, anisole, and 2-heptanone. This Drosophila melanogaster (Fruit fly) protein is Odorant receptor 74a (Or74a).